Consider the following 339-residue polypeptide: Anthranilate phosphoribosyltransferase (339 aa).

5-phospho-alpha-D-ribose 1-diphosphate-binding positions include G79, 82 to 83, S87, 89 to 92, 107 to 115, and S119; these read GD, NIST, and KHGNRSISS. G79 serves as a coordination point for anthranilate. S91 is a binding site for Mg(2+). N110 contributes to the anthranilate binding site. R165 provides a ligand contact to anthranilate. Residues D224 and E225 each coordinate Mg(2+).

Belongs to the anthranilate phosphoribosyltransferase family. As to quaternary structure, homodimer. It depends on Mg(2+) as a cofactor.

The catalysed reaction is N-(5-phospho-beta-D-ribosyl)anthranilate + diphosphate = 5-phospho-alpha-D-ribose 1-diphosphate + anthranilate. The protein operates within amino-acid biosynthesis; L-tryptophan biosynthesis; L-tryptophan from chorismate: step 2/5. Functionally, catalyzes the transfer of the phosphoribosyl group of 5-phosphorylribose-1-pyrophosphate (PRPP) to anthranilate to yield N-(5'-phosphoribosyl)-anthranilate (PRA). This chain is Anthranilate phosphoribosyltransferase, found in Listeria welshimeri serovar 6b (strain ATCC 35897 / DSM 20650 / CCUG 15529 / CIP 8149 / NCTC 11857 / SLCC 5334 / V8).